Here is a 175-residue protein sequence, read N- to C-terminus: MNLDFIKSKIAAVPDFPKPGIMFRDITPLLADPQGLRKTAEAMAQELKNKGIQPTIIAGTESRGFIFGVALAEVLGLGFVPVRKPGKLPRATYSVKYDLEYGSDSLEIHQDAFKVTDEVLVVDDLLATGGTAKATVDLIEKTQAKVAGLIFVMELDSLGGREVLAGYNVSALIKF.

Belongs to the purine/pyrimidine phosphoribosyltransferase family. In terms of assembly, homodimer.

It localises to the cytoplasm. The enzyme catalyses AMP + diphosphate = 5-phospho-alpha-D-ribose 1-diphosphate + adenine. It functions in the pathway purine metabolism; AMP biosynthesis via salvage pathway; AMP from adenine: step 1/1. In terms of biological role, catalyzes a salvage reaction resulting in the formation of AMP, that is energically less costly than de novo synthesis. In Francisella tularensis subsp. holarctica (strain FTNF002-00 / FTA), this protein is Adenine phosphoribosyltransferase.